Consider the following 491-residue polypeptide: Glutamyl-tRNA(Gln) amidotransferase subunit A (491 aa).

Catalysis depends on charge relay system residues Lys78 and Ser158. Ser182 serves as the catalytic Acyl-ester intermediate.

This sequence belongs to the amidase family. GatA subfamily. Heterotrimer of A, B and C subunits.

The catalysed reaction is L-glutamyl-tRNA(Gln) + L-glutamine + ATP + H2O = L-glutaminyl-tRNA(Gln) + L-glutamate + ADP + phosphate + H(+). Allows the formation of correctly charged Gln-tRNA(Gln) through the transamidation of misacylated Glu-tRNA(Gln) in organisms which lack glutaminyl-tRNA synthetase. The reaction takes place in the presence of glutamine and ATP through an activated gamma-phospho-Glu-tRNA(Gln). In Bradyrhizobium sp. (strain ORS 278), this protein is Glutamyl-tRNA(Gln) amidotransferase subunit A.